Consider the following 444-residue polypeptide: Squalene synthase ERG9 (444 aa).

A helical transmembrane segment spans residues 421–441 (FNMVLSIILSVLLGFYYIYTL).

Belongs to the phytoene/squalene synthase family. Mg(2+) is required as a cofactor.

The protein resides in the endoplasmic reticulum membrane. The protein localises to the microsome. The catalysed reaction is 2 (2E,6E)-farnesyl diphosphate + NADPH + H(+) = squalene + 2 diphosphate + NADP(+). The enzyme catalyses 2 (2E,6E)-farnesyl diphosphate + NADH + H(+) = squalene + 2 diphosphate + NAD(+). It participates in terpene metabolism; lanosterol biosynthesis; lanosterol from farnesyl diphosphate: step 1/3. Its function is as follows. Squalene synthase; part of the third module of ergosterol biosynthesis pathway that includes the late steps of the pathway. ERG9 produces squalene from 2 farnesyl pyrophosphate moieties. The third module or late pathway involves the ergosterol synthesis itself through consecutive reactions that mainly occur in the endoplasmic reticulum (ER) membrane. Firstly, the squalene synthase ERG9 catalyzes the condensation of 2 farnesyl pyrophosphate moieties to form squalene, which is the precursor of all steroids. Squalene synthase is crucial for balancing the incorporation of farnesyl diphosphate (FPP) into sterol and nonsterol isoprene synthesis. Secondly, the squalene epoxidase ERG1 catalyzes the stereospecific oxidation of squalene to (S)-2,3-epoxysqualene, which is considered to be a rate-limiting enzyme in steroid biosynthesis. Then, the lanosterol synthase ERG7 catalyzes the cyclization of (S)-2,3 oxidosqualene to lanosterol, a reaction that forms the sterol core. In the next steps, lanosterol is transformed to zymosterol through a complex process involving various demethylation, reduction and desaturation reactions. The lanosterol 14-alpha-demethylase ERG11 (also known as CYP51) catalyzes C14-demethylation of lanosterol to produce 4,4'-dimethyl cholesta-8,14,24-triene-3-beta-ol, which is critical for ergosterol biosynthesis. The C-14 reductase ERG24 reduces the C14=C15 double bond of 4,4-dimethyl-cholesta-8,14,24-trienol to produce 4,4-dimethyl-cholesta-8,24-dienol. 4,4-dimethyl-cholesta-8,24-dienol is substrate of the C-4 demethylation complex ERG25-ERG26-ERG27 in which ERG25 catalyzes the three-step monooxygenation required for the demethylation of 4,4-dimethyl and 4alpha-methylsterols, ERG26 catalyzes the oxidative decarboxylation that results in a reduction of the 3-beta-hydroxy group at the C-3 carbon to an oxo group, and ERG27 is responsible for the reduction of the keto group on the C-3. ERG28 has a role as a scaffold to help anchor ERG25, ERG26 and ERG27 to the endoplasmic reticulum and ERG29 regulates the activity of the iron-containing C4-methylsterol oxidase ERG25. Then, the sterol 24-C-methyltransferase ERG6 catalyzes the methyl transfer from S-adenosyl-methionine to the C-24 of zymosterol to form fecosterol. The C-8 sterol isomerase ERG2 catalyzes the reaction which results in unsaturation at C-7 in the B ring of sterols and thus converts fecosterol to episterol. The sterol-C5-desaturase ERG3 then catalyzes the introduction of a C-5 double bond in the B ring to produce 5-dehydroepisterol. The C-22 sterol desaturase ERG5 further converts 5-dehydroepisterol into ergosta-5,7,22,24(28)-tetraen-3beta-ol by forming the C-22(23) double bond in the sterol side chain. Finally, ergosta-5,7,22,24(28)-tetraen-3beta-ol is substrate of the C-24(28) sterol reductase ERG4 to produce ergosterol. The polypeptide is Squalene synthase ERG9 (Saccharomyces cerevisiae (strain ATCC 204508 / S288c) (Baker's yeast)).